Consider the following 213-residue polypeptide: ATP-dependent dethiobiotin synthetase BioD (213 aa).

13–18 serves as a coordination point for ATP; it reads GIGKTV. Thr17 is a Mg(2+) binding site. Lys33 is a catalytic residue. Mg(2+) is bound at residue Glu100. ATP-binding positions include 100–103 and 184–186; these read EGAG and PHL.

Belongs to the dethiobiotin synthetase family. In terms of assembly, homodimer. It depends on Mg(2+) as a cofactor.

The protein resides in the cytoplasm. The enzyme catalyses (7R,8S)-7,8-diammoniononanoate + CO2 + ATP = (4R,5S)-dethiobiotin + ADP + phosphate + 3 H(+). It functions in the pathway cofactor biosynthesis; biotin biosynthesis; biotin from 7,8-diaminononanoate: step 1/2. Its function is as follows. Catalyzes a mechanistically unusual reaction, the ATP-dependent insertion of CO2 between the N7 and N8 nitrogen atoms of 7,8-diaminopelargonic acid (DAPA, also called 7,8-diammoniononanoate) to form a ureido ring. In Rhodopseudomonas palustris (strain BisA53), this protein is ATP-dependent dethiobiotin synthetase BioD.